The sequence spans 1004 residues: Centriolar coiled-coil protein of 110 kDa (1004 aa).

The tract at residues Met1 to Pro221 is CEP97 binding. Residues Glu51–Gln90 are a coiled coil. The interval Leu64 to Val82 is calmodulin-binding. A required for interaction with CEP290 region spans residues Gln67–Val82. Disordered stretches follow at residues Pro147–Ser194 and Arg239–Met279. Phosphoserine is present on Ser170. A compositionally biased stretch (low complexity) spans Ser243–Arg252. A compositionally biased stretch (basic and acidic residues) spans Ser253–Ala276. Residues Glu349 to Asp564 are interaction with CEP76. Phosphoserine occurs at positions 364, 370, and 398. Residues Gly401–Val433 are disordered. The segment covering Glu415–Val433 has biased composition (polar residues). Ser550 bears the Phosphoserine mark. The stretch at Gln641 to Asp699 forms a coiled coil. Calmodulin-binding regions lie at residues Gly773–Lys813 and Val901–Phe916. The disordered stretch occupies residues Leu955 to Ile1004. Residues Gln970–Val980 show a composition bias toward polar residues. Positions Thr994–Ile1004 are enriched in basic residues.

As to quaternary structure, interacts with CALM1, CETN2, CEP76, CEP104, CEP290 and TALPID3. Interacts with CEP97. Seems to associate with discrete CETN2, CEP97 and CEP290-containing complexes. Interacts with NEURL4 and CCNF; these interactions are not mutually exclusive and both lead to CCP110 ubiquitination and proteasome-dependent degradation. Via its interaction with NEURL4, may indirectly interact with HERC2. Interacts with KIF24, leading to its recruitment to centrioles. Interacts with USP20 and USP33. Interacts with MPHOSPH9. Interacts (via N-terminal region) with ENKD1 (via central region); ENKD1 competes with CEP97 for binding to CCP110, destabilizing the interaction between CP110 and CEP97 which promotes the removal of CCP110 and CEP97 from the mother centriole and allows the initiation of ciliogenesis. In terms of processing, phosphorylated by CDKs. Ubiquitinated by the SCF(CCNF) during G2 phase, leading to its degradation by the proteasome and preventing centrosome reduplication. Deubiquitinated by USP33 in S and G2/M phase, leading to stabilize CCP110 during the period which centrioles duplicate and elongate. Ubiquitinated by the EDVP complex, leading to its degradation.

Its subcellular location is the cytoplasm. The protein resides in the cytoskeleton. It is found in the microtubule organizing center. The protein localises to the centrosome. It localises to the centriole. Its subcellular location is the cilium basal body. Functionally, necessary for centrosome duplication at different stages of procentriole formation. Acts as a key negative regulator of ciliogenesis in collaboration with CEP97 by capping the mother centriole thereby preventing cilia formation. Also involved in promoting ciliogenesis. May play a role in the assembly of the mother centriole subdistal appendages (SDA) thereby effecting the fusion of recycling endosomes to basal bodies during cilia formation. Required for correct spindle formation and has a role in regulating cytokinesis and genome stability via cooperation with CALM1 and CETN2. The protein is Centriolar coiled-coil protein of 110 kDa (Ccp110) of Mus musculus (Mouse).